Reading from the N-terminus, the 309-residue chain is Ribonuclease Z (309 aa).

Residues histidine 63, histidine 65, aspartate 67, histidine 68, histidine 145, aspartate 216, and histidine 274 each contribute to the Zn(2+) site. Aspartate 67 functions as the Proton acceptor in the catalytic mechanism.

The protein belongs to the RNase Z family. In terms of assembly, homodimer. It depends on Zn(2+) as a cofactor.

It carries out the reaction Endonucleolytic cleavage of RNA, removing extra 3' nucleotides from tRNA precursor, generating 3' termini of tRNAs. A 3'-hydroxy group is left at the tRNA terminus and a 5'-phosphoryl group is left at the trailer molecule.. Its function is as follows. Zinc phosphodiesterase, which displays some tRNA 3'-processing endonuclease activity. Probably involved in tRNA maturation, by removing a 3'-trailer from precursor tRNA. The sequence is that of Ribonuclease Z from Streptococcus pyogenes serotype M6 (strain ATCC BAA-946 / MGAS10394).